The sequence spans 373 residues: tRNA-specific 2-thiouridylase MnmA (373 aa).

ATP is bound by residues 12 to 19 and methionine 38; that span reads GMSGGVDS. Residues 98–100 are interaction with target base in tRNA; sequence NPD. The Nucleophile role is filled by cysteine 103. Cysteine 103 and cysteine 200 are oxidised to a cystine. Glycine 127 contacts ATP. The segment at 150–152 is interaction with tRNA; sequence KDQ. The active-site Cysteine persulfide intermediate is the cysteine 200. The tract at residues 312–313 is interaction with tRNA; that stretch reads RY.

Belongs to the MnmA/TRMU family.

The protein localises to the cytoplasm. The catalysed reaction is S-sulfanyl-L-cysteinyl-[protein] + uridine(34) in tRNA + AH2 + ATP = 2-thiouridine(34) in tRNA + L-cysteinyl-[protein] + A + AMP + diphosphate + H(+). In terms of biological role, catalyzes the 2-thiolation of uridine at the wobble position (U34) of tRNA, leading to the formation of s(2)U34. This is tRNA-specific 2-thiouridylase MnmA from Streptococcus pyogenes serotype M2 (strain MGAS10270).